Consider the following 250-residue polypeptide: Probable transcriptional regulatory protein Cvib_1432 (250 aa).

It belongs to the TACO1 family.

The protein resides in the cytoplasm. The protein is Probable transcriptional regulatory protein Cvib_1432 of Chlorobium phaeovibrioides (strain DSM 265 / 1930) (Prosthecochloris vibrioformis (strain DSM 265)).